Here is a 908-residue protein sequence, read N- to C-terminus: Flap endonuclease GEN homolog 1 (908 aa).

The tract at residues 2-96 is XPG-N domain; sequence GVNDLWQILE…SKRTQTRYGP (95 aa). Mg(2+)-binding residues include aspartate 30, glutamate 75, glutamate 134, glutamate 136, aspartate 155, aspartate 157, and aspartate 208. The XPG-I domain stretch occupies residues 122 to 208; it reads ECLGMPWVQA…VGLAVLLGCD (87 aa). The 5'-3' exonuclease domain stretch occupies residues 208–383; it reads DYLPKGVPGV…LLVLLTRYDM (176 aa). The chromodomain stretch occupies residues 389-463; it reads GRKTSNQLQP…VYQKQLSETK (75 aa). Disordered regions lie at residues 460-482, 629-650, 792-834, and 853-886; these read SETKGRKQKSMKNKPKGSHLPEA, YESEQGTSDSEGSGRDLQQSNP, RDSS…NKLR, and AEDEENGFSDLGRSPQSFRPCHDKDENSTASWEN. Residues 465-476 show a composition bias toward basic residues; it reads RKQKSMKNKPKG. 2 positions are modified to phosphoserine: serine 794 and serine 795. The span at 824–834 shows a compositional bias: basic and acidic residues; that stretch reads HVRDSTHNKLR.

Belongs to the XPG/RAD2 endonuclease family. GEN subfamily. As to quaternary structure, largely monomeric, dimerizes on the Holliday junction and the first nick occurs upon dimerization at the junction. It depends on Mg(2+) as a cofactor. In terms of tissue distribution, expressed in bone marrow and testis and to a lesser extent in thymus, spleen, brain and colon.

It localises to the nucleus. Endonuclease which resolves Holliday junctions (HJs) by the introduction of symmetrically related cuts across the junction point, to produce nicked duplex products in which the nicks can be readily ligated. Four-way DNA intermediates, also known as Holliday junctions, are formed during homologous recombination and DNA repair, and their resolution is necessary for proper chromosome segregation. Cleaves HJs by a nick and counter-nick mechanism involving dual coordinated incisions that lead to the formation of ligatable nicked duplex products. Cleavage of the first strand is rate limiting, while second strand cleavage is rapid. Largely monomeric, dimerizes on the HJ and the first nick occurs upon dimerization at the junction. Efficiently cleaves both single and double HJs contained within large recombination intermediates. Exhibits a weak sequence preference for incision between two G residues that reside in a T-rich region of DNA. Also has endonuclease activity on 5'-flap and replication fork (RF) DNA substrates. The sequence is that of Flap endonuclease GEN homolog 1 (Gen1) from Mus musculus (Mouse).